The chain runs to 1676 residues: Protein TIC 214 (1676 aa).

Helical transmembrane passes span 24 to 44 (KIIN…ALAL), 70 to 90 (LILG…YIAF), 93 to 113 (PYTL…GNNL), 130 to 150 (LEIL…TCIF), 170 to 190 (MVFL…VLMC), and 218 to 238 (FFLV…IQSL). Basic and acidic residues-rich tracts occupy residues 264-276 (LKKS…GKST) and 283-298 (SHEK…SKLE). Disordered stretches follow at residues 264 to 302 (LKKS…NEDE), 546 to 610 (LVVF…SYSI), 1123 to 1151 (NKQS…NLIL), and 1372 to 1436 (QQQN…SEDD). Polar residues predominate over residues 562–586 (DSGNIQNKSSDKTINPQNNLTNSKT). Basic and acidic residues predominate over residues 597–610 (TTEKEPKDDKSYSI). The span at 1123-1138 (NKQSLQKGNSKGNSNL) shows a compositional bias: polar residues. Positions 1372–1390 (QQQNQTTTKINTETKNQQK) are enriched in low complexity. Residues 1384–1436 (ETKNQQKNRVENEENKETENQQNAETKNKQKSKTENEENKETENQQNDESEDD) adopt a coiled-coil conformation. Composition is skewed to basic and acidic residues over residues 1391 to 1402 (NRVENEENKETE) and 1409 to 1426 (TKNK…KETE).

Belongs to the TIC214 family. Part of the Tic complex.

The protein localises to the plastid. Its subcellular location is the chloroplast inner membrane. Functionally, involved in protein precursor import into chloroplasts. May be part of an intermediate translocation complex acting as a protein-conducting channel at the inner envelope. The polypeptide is Protein TIC 214 (Cuscuta obtusiflora (Peruvian dodder)).